Consider the following 411-residue polypeptide: Pyridinium-3,5-bisthiocarboxylic acid mononucleotide nickel insertion protein (411 aa).

The protein belongs to the LarC family.

The catalysed reaction is Ni(II)-pyridinium-3,5-bisthiocarboxylate mononucleotide = pyridinium-3,5-bisthiocarboxylate mononucleotide + Ni(2+). Its function is as follows. Involved in the biosynthesis of a nickel-pincer cofactor ((SCS)Ni(II) pincer complex). Binds Ni(2+), and functions in nickel delivery to pyridinium-3,5-bisthiocarboxylic acid mononucleotide (P2TMN), to form the mature cofactor. Is thus probably required for the activation of nickel-pincer cofactor-dependent enzymes. The polypeptide is Pyridinium-3,5-bisthiocarboxylic acid mononucleotide nickel insertion protein (Geobacillus kaustophilus (strain HTA426)).